Reading from the N-terminus, the 1135-residue chain is MIMWGLLLTMILIDFGASLRNVYDMKIECPHSINFGESSVTGKVELPPLLLTDAEALVPESSCNMDNHQSMSIIQKVTKVSWRKKADKAQAAKDSFETTSSEVNLKGTCALSHRMVEESYRNRRSVICYDLSCNSTHCKPTMHMIVPVHSCNMMKSCLVGLGPYRIQIVYERTYCTTGILTEGKCFVPDQSIVNVIKNGVFDIASVSIVCFFIRVKGTNYKIMASIKTATANNCNDTDNKVQGYYLCIVGGNSSPVYAPSTTDFRSMEALASLLRAPHGEDHDLSGEEVATYSIAGQIEGKIPHTANAANMLFTAFSGIPSYSSLSVFIGSQDGPVIYSPGLFPRLNQSSCDKIALPLIWEGYIDLPGYYETVHPCNVFCVLSGPGASCEAFSEGGIFNITSPTCLVSKQNRFRAAEQQVNFVCQRVDQDIVIYCNGQKKTILTKTLVIGQCIYSVTSLFSIMPGVAHSIAIELCVPGFHGWATAALLTTFCFGWILILSITLAVLVVLKFFAAILHNSSQENRFKIILRKIKEEFEKTKGSMVCEVCKYECETGKELKAHNLSCPQSQCPYCFTHCEPTESAFQAHYKVCQATHRFRDDLKKTITPQSTSPGCYRTLNLFRYKSRCYIFTVWVTLLIIESIMWAASASETVLEPSWNDNAHGVGVVPMHTDLELDFSLPSSSKYTYKRKLTSPLNQEQSVDLHIEIESQGISTSVHALGHWFDGRLNLKTSFHCYGACTKYEYPWHTAKCHFERDFEYENNWGCNPADCPGIGTGCTACGLYIDQLKPVGSAYKLITVRYSRKVCVQFGEENLCKTIDMNDCFVTRHVKVCIIGTVSKFSQGDTLVFLGPMEGGGLIFKDWCTSTCQFGDPGDIMSPKDKGFSCPDFTGHFRKKCNFATTPVCEYDGNMVSGYKKVMATIDSFQSFNTSSIHYTDERIEWKDPDGMLKDHLNILVTKDIDFENLGENPCKVGLQTSSIEGAWGSGVGFTLTCQISLTECSRFLTSIKACDMAICYGAQSVTLIRGQNTVKVSGKGGHSGSSFKCCHGTDCSQQGLQASAPHLDKVNGIVEQESEKVYDDGAPQCGISCWFVKSGEWITGIFNGNWIVIVVLVFFFILSLILLSLLCPIRKHKRS.

A signal peptide spans 1–18; sequence MIMWGLLLTMILIDFGAS. The Lumenal segment spans residues 19–495; it reads LRNVYDMKIE…ALLTTFCFGW (477 aa). Cystine bridges form between Cys29/Cys151, Cys63/Cys157, Cys109/Cys128, Cys133/Cys138, Cys175/Cys185, Cys210/Cys247, Cys234/Cys351, Cys376/Cys435, Cys380/Cys389, Cys405/Cys424, and Cys452/Cys475. An N-linked (GlcNAc...) asparagine; by host glycan is attached at Asn134. 2 N-linked (GlcNAc...) asparagine; by host glycosylation sites follow: Asn235 and Asn347. N-linked (GlcNAc...) asparagine; by host glycosylation is present at Asn399. Residues 496 to 516 traverse the membrane as a helical segment; the sequence is ILILSITLAVLVVLKFFAAIL. A binding to the ribonucleoprotein region spans residues 516–533; sequence LHNSSQENRFKIILRKIK. At 517 to 627 the chain is on the cytoplasmic side; that stretch reads HNSSQENRFK…LNLFRYKSRC (111 aa). CCHC-type zinc fingers lie at residues 545–565 and 570–591; these read CEVCKYECETGKELKAHNLSC and CPYCFTHCEPTESAFQAHYKVC. Binding to the ribonucleoprotein stretches follow at residues 588 to 605, 592 to 603, and 611 to 625; these read YKVCQATHRFRDDLKKTI, QATHRFRDDLKK, and SPGCYRTLNLFRYKS. The region spanning 611–634 is the ITAM domain; it reads SPGCYRTLNLFRYKSRCYIFTVWV. Residues Tyr615 and Tyr628 each carry the phosphotyrosine modification. The short motif at 615 to 618 is the YxxL element; that stretch reads YRTL. A helical membrane pass occupies residues 628 to 648; that stretch reads YIFTVWVTLLIIESIMWAASA. The Lumenal segment spans residues 649–1105; it reads SETVLEPSWN…EWITGIFNGN (457 aa). 8 disulfides stabilise this stretch: Cys735-Cys770, Cys739-Cys777, Cys751-Cys885, Cys765-Cys896, Cys780-Cys904, Cys806-Cys815, Cys823-Cys832, and Cys863-Cys867. The tract at residues 757 to 777 is fusion loop; that stretch reads FEYENNWGCNPADCPGIGTGC. N-linked (GlcNAc...) asparagine; by host glycosylation is present at Asn928. 5 disulfides stabilise this stretch: Cys970–Cys1000, Cys993–Cys1045, Cys1010–Cys1015, Cys1046–Cys1051, and Cys1085–Cys1089. The helical transmembrane segment at 1106–1126 threads the bilayer; it reads WIVIVVLVFFFILSLILLSLL. The interval 1122 to 1135 is binding to the ribonucleoprotein; sequence LLSLLCPIRKHKRS. Residues 1127 to 1135 lie on the Cytoplasmic side of the membrane; the sequence is CPIRKHKRS.

This sequence belongs to the hantavirus envelope glycoprotein family. Homodimer. Homotetramer; forms heterotetrameric Gn-Gc spikes in the pre-fusion conformation. Interacts (via C-terminus) with the nucleoprotein. Interacts with host TUFM; this interaction contributes to the virus-induced degradation of mitochondria by autophagy, which leads to degradation of host MAVS and inhibition of type I interferon (IFN) responses. Interacts with host MAP1LC3B; this interaction contributes to the virus-induced degradation of mitochondria by autophagy, which leads to degradation of host MAVS and inhibition of type I interferon (IFN) responses. In terms of assembly, homodimer. Homotetramer; forms heterotetrameric Gn-Gc spikes in the pre-fusion conformation. Homotrimer; forms homotrimer in the post-fusion conformation at acidic pH. Interacts (via C-terminus) with the nucleoprotein. In terms of processing, envelope polyprotein precursor is quickly cleaved in vivo just after synthesis, presumably by host signal peptidase.

The protein resides in the virion membrane. The protein localises to the host cell surface. Its subcellular location is the host Golgi apparatus membrane. It is found in the host endoplasmic reticulum membrane. It localises to the host mitochondrion. Its function is as follows. Forms homotetramers with glycoprotein C at the surface of the virion. Attaches the virion to host cell receptors including integrin ITGAV/ITGB3. This attachment induces virion internalization predominantly through clathrin-dependent endocytosis. Mediates the assembly and budding of infectious virus particles through its interaction with the nucleocapsid protein and the viral genome. May dysregulate normal immune and endothelial cell responses through an ITAM motif. Translocates to mitochondria, binds to host TUFM and recruits MAP1LC3B. These interactions induce mitochondrial autophagy and therefore destruction of host MAVS leading to inhibition of type I interferon (IFN) responses. Concomitant breakdown of glycoprotein N is apparently prevented by the nucleoprotein that may inhibit Gn-stimulated autophagosome-lysosome fusion. Interacts with the viral genomic RNA. Forms homotetramers with glycoprotein N at the surface of the virion. Attaches the virion to host cell receptors including integrin ITGAV/ITGB3. This attachment induces virion internalization predominantly through clathrin-dependent endocytosis. Class II fusion protein that promotes fusion of viral membrane with host endosomal membrane after endocytosis of the virion. This is Envelopment polyprotein (GP) from Dobrava-Belgrade orthohantavirus (DOBV).